The sequence spans 420 residues: Diaminopimelate decarboxylase (420 aa).

K54 is subject to N6-(pyridoxal phosphate)lysine. H191 is a binding site for substrate. Pyridoxal 5'-phosphate contacts are provided by residues G227 and 268–271 (EPGR). The substrate site is built by R271, R307, and Y311. The active-site Proton donor is C342. Positions 343 and 378 each coordinate substrate. Y378 contacts pyridoxal 5'-phosphate.

Belongs to the Orn/Lys/Arg decarboxylase class-II family. LysA subfamily. Requires pyridoxal 5'-phosphate as cofactor.

It carries out the reaction meso-2,6-diaminopimelate + H(+) = L-lysine + CO2. The protein operates within amino-acid biosynthesis; L-lysine biosynthesis via DAP pathway; L-lysine from DL-2,6-diaminopimelate: step 1/1. Its activity is regulated as follows. Is activated by 2,3-dimercaptopropan-1-ol. Its function is as follows. Specifically catalyzes the decarboxylation of meso-diaminopimelate (meso-DAP) to L-lysine. Is not active against the DD- or LL-isomers of diaminopimelate. This Escherichia coli (strain K12) protein is Diaminopimelate decarboxylase.